A 406-amino-acid polypeptide reads, in one-letter code: CMP-sialic acid transporter 2 (406 aa).

At 1-41 the chain is on the cytoplasmic side; that stretch reads MKNGMAECSVCRSRLVSPSSKAISRAYDNYNYKIRVSSKQR. A helical membrane pass occupies residues 42–62; that stretch reads ALNVFLVVGDCMLVGLQPVLV. Residues 63–75 are Lumenal-facing; that stretch reads YMSKVDGKFNFSP. A helical transmembrane segment spans residues 76 to 96; sequence ISVNFLTEIAKVIFAMVMLLF. The Cytoplasmic portion of the chain corresponds to 97–148; that stretch reads QARHQKVGEKPLLSLSTFVQAARNNMLLAVPAGLYAINNYLKFTMQLYFNPA. The chain crosses the membrane as a helical span at residues 149–169; that stretch reads TVKMLSNLKVLVIAVLLKMIM. The Lumenal segment spans residues 170–172; the sequence is KRR. Residues 173–193 traverse the membrane as a helical segment; the sequence is FSIIQWEALALLLIGISINQL. Residues 194 to 201 lie on the Cytoplasmic side of the membrane; that stretch reads RSLPEGAT. Residues 202 to 222 traverse the membrane as a helical segment; sequence TVAVPIATGAYICTFIFVTVP. Residues 223 to 245 are Lumenal-facing; that stretch reads SLASVYNEYALKSQYDTSIYLQN. A helical transmembrane segment spans residues 246–266; that stretch reads LFLYGYGAIFNFLGILGTVIY. Residues 267 to 282 lie on the Cytoplasmic side of the membrane; sequence KGPGSFDILQGHSRAT. Residues 283–303 form a helical membrane-spanning segment; it reads MFLILNNAAQGILSSFFFKYA. The Lumenal segment spans residues 304–323; it reads DTILKKYSSTVATIFTGIAS. Residues 324–344 traverse the membrane as a helical segment; the sequence is AALFGHILTMNFLLGISIVFI. Residues 345-406 lie on the Cytoplasmic side of the membrane; sequence SMHQFFSPLS…SDDRVPLLPR (62 aa).

The protein belongs to the nucleotide-sugar transporter family. CMP-Sialate:CMP antiporter (TC 2.A.7.12) subfamily.

The protein resides in the golgi apparatus membrane. Sugar transporter involved in the transport of CMP-sialic acid from the cytoplasm into the Golgi. This chain is CMP-sialic acid transporter 2, found in Arabidopsis thaliana (Mouse-ear cress).